The chain runs to 568 residues: Sphingosine-1-phosphate lyase 1 (568 aa).

Residues 1–41 (MPSTDLLKLKDFEPYLEILEAYSTKAKNYVNGYCTKYEPWQ) are Lumenal-facing. The chain crosses the membrane as a helical; Signal-anchor for type III membrane protein span at residues 42 to 62 (LIAGSVLCTLLVVWVYELIFQ). The Cytoplasmic portion of the chain corresponds to 63-568 (PESLWSRFKN…NQMNGSPKPR (506 aa)). Lys-353 bears the N6-(pyridoxal phosphate)lysine; alternate mark. At Lys-353 the chain carries N6-acetyllysine; alternate. 3'-nitrotyrosine occurs at positions 356 and 366. Ser-564 carries the post-translational modification Phosphoserine.

This sequence belongs to the group II decarboxylase family. Sphingosine-1-phosphate lyase subfamily. Homodimer. Pyridoxal 5'-phosphate is required as a cofactor.

The protein resides in the endoplasmic reticulum membrane. It carries out the reaction sphinganine 1-phosphate = hexadecanal + phosphoethanolamine. It catalyses the reaction sphing-4-enine 1-phosphate = (2E)-hexadecenal + phosphoethanolamine. Its pathway is lipid metabolism; sphingolipid metabolism. Cleaves phosphorylated sphingoid bases (PSBs), such as sphingosine-1-phosphate, into fatty aldehydes and phosphoethanolamine. Elevates stress-induced ceramide production and apoptosis. Required for global lipid homeostasis in liver and cholesterol homeostasis in fibroblasts. Involved in the regulation of pro-inflammatory response and neutrophil trafficking. Modulates neuronal autophagy via phosphoethanolamine production which regulates accumulation of aggregate-prone proteins such as APP. Seems to play a role in establishing neuronal contact sites and axonal maintenance. The polypeptide is Sphingosine-1-phosphate lyase 1 (Rattus norvegicus (Rat)).